Here is a 228-residue protein sequence, read N- to C-terminus: Odorant-binding protein 47 (228 aa).

Intrachain disulfides connect Cys-60–Cys-225, Cys-73–Cys-215, Cys-74–Cys-204, Cys-88–Cys-114, Cys-110–Cys-185, and Cys-158–Cys-195. Asn-117 is a glycosylation site (N-linked (GlcNAc...) asparagine).

The protein belongs to the PBP/GOBP family. Post-translationally, glycosylated. In terms of tissue distribution, head without antennae (at protein level).

The protein resides in the secreted. Its function is as follows. Present in the aqueous fluid surrounding olfactory sensory dendrites and are thought to aid in the capture and transport of hydrophobic odorants into and through this fluid. Binds N-phenyl-1-naphthylamine, menthol, citronellal, 1-dodecanol, decanal, p-tert-butylbenzophenone, 4-hydroxy-4'-isopropylazobenzene, 2-pyrrolyl-p-methyl-azobenzene and indole. Expressed in mosquito head but barely detectable in antennae, which suggests that it may be present in mouth structures, such as palpi and proboscis, and may have a function in taste. This Anopheles gambiae (African malaria mosquito) protein is Odorant-binding protein 47.